The chain runs to 587 residues: D-lactate dehydrogenase [cytochrome] 1, mitochondrial (587 aa).

The FAD-binding PCMH-type domain maps to 146–327; sequence SPEQRPRIIL…TEATVKCHVK (182 aa).

The protein belongs to the FAD-binding oxidoreductase/transferase type 4 family. FAD serves as cofactor.

Its subcellular location is the mitochondrion inner membrane. The enzyme catalyses (R)-lactate + 2 Fe(III)-[cytochrome c] = 2 Fe(II)-[cytochrome c] + pyruvate + 2 H(+). In terms of biological role, catalyzes the stereospecific oxidation of D-lactate to pyruvate. This Saccharomyces cerevisiae (strain ATCC 204508 / S288c) (Baker's yeast) protein is D-lactate dehydrogenase [cytochrome] 1, mitochondrial.